Reading from the N-terminus, the 390-residue chain is Chorismate synthase (390 aa).

2 residues coordinate NADP(+): Arg-48 and Arg-54. FMN is bound by residues Arg-132–Ser-134, Asn-244–Ala-245, Gly-289, Lys-304–Ser-308, and Arg-330. Positions Val-362–Gly-390 are disordered. Positions Gly-363–Thr-379 are enriched in low complexity. The segment covering His-380–Gly-390 has biased composition (gly residues).

This sequence belongs to the chorismate synthase family. In terms of assembly, homotetramer. FMNH2 is required as a cofactor.

It carries out the reaction 5-O-(1-carboxyvinyl)-3-phosphoshikimate = chorismate + phosphate. Its pathway is metabolic intermediate biosynthesis; chorismate biosynthesis; chorismate from D-erythrose 4-phosphate and phosphoenolpyruvate: step 7/7. Catalyzes the anti-1,4-elimination of the C-3 phosphate and the C-6 proR hydrogen from 5-enolpyruvylshikimate-3-phosphate (EPSP) to yield chorismate, which is the branch point compound that serves as the starting substrate for the three terminal pathways of aromatic amino acid biosynthesis. This reaction introduces a second double bond into the aromatic ring system. This Methylobacterium sp. (strain 4-46) protein is Chorismate synthase.